We begin with the raw amino-acid sequence, 489 residues long: Virion host shutoff protein (489 aa).

Disordered stretches follow at residues 110-135 (EEAS…AFSN), 142-161 (SLAS…PSAA), 285-319 (RSQT…ETRV), and 332-364 (GYED…LTPP). Residues 124–134 (ITDSRPSSAFS) show a composition bias toward polar residues.

This sequence belongs to the herpesviridae VHS protein family. As to quaternary structure, interacts with human EIF4H, EIF4A1 and EIF4A2; interaction with eIF4AI and EIF4A2 presumably allows Vhs protein to associate with the eIF4F cap-binding complex.

It localises to the virion. Its function is as follows. Minor structural protein that acts as an endoribonuclease during lytic infection. Degrades host mRNAs in the cytoplasm by cutting them at preferred sites, including some in regions of translation initiation. Together with inhibition of host splicing by ICP27, contributes to an overall decrease in host protein synthesis. Also, after the onset of viral transcription, accelerates the turnover of viral mRNA, thereby facilitating the sequential expression of different classes of viral genes. Binds translation initiation factors eIF4H, eIF4AI, and eIF4AII, thereby may interact directly with the translation initiation complex and thus digest specifically mRNAs. Also impedes antigen presentation by major histocompatibility complex class I and class II molecules, inhibits secretion of cytokines that would otherwise recruit lymphocytes and neutrophils cells to the site of infection and blocks the activation of dendritic cells. Plays a role in the inhibition of interferon-beta activation by the cGAS/STING pathway. Mechanistically, down-regulates the expression of host cGAS/MB21D1. Also decreases the accumulation of other interferon-induced mRNAs such as host IFIT3 or CH25H to subvert their antiviral activity. This is Virion host shutoff protein (UL41) from Human herpesvirus 1 (strain 17) (HHV-1).